Reading from the N-terminus, the 198-residue chain is Recombination protein RecR (198 aa).

The C4-type zinc finger occupies 57 to 72; the sequence is CSVCGHITENDPCYIC. The Toprim domain occupies 80-175; that stretch reads SVICVVEDDK…KVTRLAQGLS (96 aa).

This sequence belongs to the RecR family.

Functionally, may play a role in DNA repair. It seems to be involved in an RecBC-independent recombinational process of DNA repair. It may act with RecF and RecO. The sequence is that of Recombination protein RecR from Staphylococcus haemolyticus (strain JCSC1435).